We begin with the raw amino-acid sequence, 110 residues long: Small ribosomal subunit protein eS25 (110 aa).

Residues 1-37 form a disordered region; the sequence is MGGASKKPISTMEKRLKKEAEKQQKAEEKKKGPSKTG. The span at 12-37 shows a compositional bias: basic and acidic residues; sequence MEKRLKKEAEKQQKAEEKKKGPSKTG.

The protein belongs to the eukaryotic ribosomal protein eS25 family.

The sequence is that of Small ribosomal subunit protein eS25 (rps25e) from Saccharolobus solfataricus (strain ATCC 35092 / DSM 1617 / JCM 11322 / P2) (Sulfolobus solfataricus).